The chain runs to 327 residues: Thiamine-monophosphate kinase (327 aa).

Mg(2+) contacts are provided by Asp30, Ser45, Ser46, and Asp47. His54 lines the substrate pocket. Position 76 (Asp76) interacts with Mg(2+). ATP contacts are provided by residues Tyr106, 123 to 124 (GD), and Arg149. Position 124 (Asp124) interacts with Mg(2+). Mg(2+) is bound at residue Asp221. Residue Ser223 coordinates ATP. Residue Asp224 coordinates Mg(2+). Substrate-binding residues include Glu268 and Phe321.

It belongs to the thiamine-monophosphate kinase family.

The catalysed reaction is thiamine phosphate + ATP = thiamine diphosphate + ADP. The protein operates within cofactor biosynthesis; thiamine diphosphate biosynthesis; thiamine diphosphate from thiamine phosphate: step 1/1. Its function is as follows. Catalyzes the ATP-dependent phosphorylation of thiamine-monophosphate (TMP) to form thiamine-pyrophosphate (TPP), the active form of vitamin B1. This is Thiamine-monophosphate kinase from Synechococcus elongatus (strain ATCC 33912 / PCC 7942 / FACHB-805) (Anacystis nidulans R2).